The sequence spans 105 residues: Small ribosomal subunit protein uS10c (105 aa).

This sequence belongs to the universal ribosomal protein uS10 family. Part of the 30S ribosomal subunit.

The protein localises to the plastid. Its subcellular location is the chloroplast. Its function is as follows. Involved in the binding of tRNA to the ribosomes. The polypeptide is Small ribosomal subunit protein uS10c (Gracilaria tenuistipitata var. liui (Red alga)).